A 377-amino-acid chain; its full sequence is Erythronate-4-phosphate dehydrogenase (377 aa).

Residues Ser45 and Thr67 each coordinate substrate. NAD(+) is bound by residues 127-128 (QV), Asp147, and Thr176. Arg209 is an active-site residue. Asp233 serves as a coordination point for NAD(+). The active site involves Glu238. The active-site Proton donor is His255. Gly258 is a binding site for NAD(+). Tyr259 is a binding site for substrate.

This sequence belongs to the D-isomer specific 2-hydroxyacid dehydrogenase family. PdxB subfamily. In terms of assembly, homodimer.

The protein resides in the cytoplasm. The catalysed reaction is 4-phospho-D-erythronate + NAD(+) = (R)-3-hydroxy-2-oxo-4-phosphooxybutanoate + NADH + H(+). It participates in cofactor biosynthesis; pyridoxine 5'-phosphate biosynthesis; pyridoxine 5'-phosphate from D-erythrose 4-phosphate: step 2/5. Its function is as follows. Catalyzes the oxidation of erythronate-4-phosphate to 3-hydroxy-2-oxo-4-phosphonooxybutanoate. The protein is Erythronate-4-phosphate dehydrogenase of Vibrio vulnificus (strain CMCP6).